A 474-amino-acid chain; its full sequence is 3-isopropylmalate dehydratase large subunit (474 aa).

Cys353, Cys414, and Cys417 together coordinate [4Fe-4S] cluster.

It belongs to the aconitase/IPM isomerase family. LeuC type 1 subfamily. In terms of assembly, heterodimer of LeuC and LeuD. Requires [4Fe-4S] cluster as cofactor.

The catalysed reaction is (2R,3S)-3-isopropylmalate = (2S)-2-isopropylmalate. Its pathway is amino-acid biosynthesis; L-leucine biosynthesis; L-leucine from 3-methyl-2-oxobutanoate: step 2/4. Functionally, catalyzes the isomerization between 2-isopropylmalate and 3-isopropylmalate, via the formation of 2-isopropylmaleate. This Xylella fastidiosa (strain 9a5c) protein is 3-isopropylmalate dehydratase large subunit.